Here is a 347-residue protein sequence, read N- to C-terminus: D-alanine--D-alanine ligase (347 aa).

The ATP-grasp domain maps to 134–332 (KLYAKDLGVK…LAQSLPKTPK (199 aa)). 161–216 (LIGFNFPFIVKPSNAGSSLGVNVVKEEKELIYALDSAFEYSKEVLIEPFIQGVKEY) lines the ATP pocket. D288, E300, and N302 together coordinate Mg(2+).

Belongs to the D-alanine--D-alanine ligase family. Mg(2+) is required as a cofactor. The cofactor is Mn(2+).

Its subcellular location is the cytoplasm. It catalyses the reaction 2 D-alanine + ATP = D-alanyl-D-alanine + ADP + phosphate + H(+). It participates in cell wall biogenesis; peptidoglycan biosynthesis. In terms of biological role, cell wall formation. In Helicobacter pylori (strain J99 / ATCC 700824) (Campylobacter pylori J99), this protein is D-alanine--D-alanine ligase.